The sequence spans 544 residues: Probable protein kinase UbiB (544 aa).

The Protein kinase domain occupies 123–505 (EFDEQALASA…GRQKSHNVRS (383 aa)). Residues 129-137 (LASASIAQV) and Lys156 each bind ATP. Residue Asp291 is the Proton acceptor of the active site. A helical membrane pass occupies residues 522–540 (LPLWLSCGTLVTVLLVLLL).

This sequence belongs to the ABC1 family. UbiB subfamily.

It localises to the cell inner membrane. Its pathway is cofactor biosynthesis; ubiquinone biosynthesis [regulation]. Functionally, is probably a protein kinase regulator of UbiI activity which is involved in aerobic coenzyme Q (ubiquinone) biosynthesis. This is Probable protein kinase UbiB from Actinobacillus pleuropneumoniae serotype 7 (strain AP76).